A 229-amino-acid polypeptide reads, in one-letter code: Large ribosomal subunit protein uL1 (229 aa).

The protein belongs to the universal ribosomal protein uL1 family. As to quaternary structure, part of the 50S ribosomal subunit.

Functionally, binds directly to 23S rRNA. The L1 stalk is quite mobile in the ribosome, and is involved in E site tRNA release. In terms of biological role, protein L1 is also a translational repressor protein, it controls the translation of the L11 operon by binding to its mRNA. This is Large ribosomal subunit protein uL1 from Streptococcus uberis (strain ATCC BAA-854 / 0140J).